A 476-amino-acid chain; its full sequence is Ribulose bisphosphate carboxylase large chain (476 aa).

Positions 124 and 174 each coordinate substrate. The Proton acceptor role is filled by lysine 176. Residue lysine 178 participates in substrate binding. Lysine 202, aspartate 204, and glutamate 205 together coordinate Mg(2+). N6-carboxylysine is present on lysine 202. Histidine 295 functions as the Proton acceptor in the catalytic mechanism. Substrate is bound by residues arginine 296, histidine 328, and serine 380.

The protein belongs to the RuBisCO large chain family. Type I subfamily. As to quaternary structure, heterohexadecamer of 8 large chains and 8 small chains; disulfide-linked. The disulfide link is formed within the large subunit homodimers. Mg(2+) serves as cofactor. In terms of processing, the disulfide bond which can form in the large chain dimeric partners within the hexadecamer appears to be associated with oxidative stress and protein turnover.

The protein resides in the carboxysome. The enzyme catalyses 2 (2R)-3-phosphoglycerate + 2 H(+) = D-ribulose 1,5-bisphosphate + CO2 + H2O. The catalysed reaction is D-ribulose 1,5-bisphosphate + O2 = 2-phosphoglycolate + (2R)-3-phosphoglycerate + 2 H(+). In terms of biological role, ruBisCO catalyzes two reactions: the carboxylation of D-ribulose 1,5-bisphosphate, the primary event in carbon dioxide fixation, as well as the oxidative fragmentation of the pentose substrate in the photorespiration process. Both reactions occur simultaneously and in competition at the same active site. This is Ribulose bisphosphate carboxylase large chain from Cyanothece sp. (strain PCC 7425 / ATCC 29141).